The primary structure comprises 920 residues: Plasma membrane ATPase (920 aa).

Basic and acidic residues predominate over residues 1–11 (MSDERITEKPP). The interval 1-71 (MSDERITEKP…AEEDDGPAAA (71 aa)) is disordered. Residues 1–117 (MSDERITEKP…REESENLLVK (117 aa)) are Cytoplasmic-facing. The segment covering 17–50 (SEGEPVPEEEVEEETEEEVPDEQSSEDDDIDGLI) has biased composition (acidic residues). The chain crosses the membrane as a helical span at residues 118–138 (FLMFFIGPIQFVMEAAAVLAA). Over 139 to 142 (GLED) the chain is Extracellular. A helical transmembrane segment spans residues 143 to 162 (WVDFGVICGLLFLNAGVGFI). The Cytoplasmic portion of the chain corresponds to 163-293 (QEFQAGSIVE…GQGHFTEVLN (131 aa)). The helical transmembrane segment at 294–315 (GIGVILLVLVVITLLLIWTACF) threads the bilayer. Residues 316–326 (YRTVRIVPILR) are Extracellular-facing. A helical transmembrane segment spans residues 327-349 (YTLGITIVGVPVGLPAVVTTTMA). The Cytoplasmic segment spans residues 350 to 721 (GGAAYLAKKQ…IAILNHSLDI (372 aa)). Residue Asp380 is the 4-aspartylphosphate intermediate of the active site. Asp636 and Asp640 together coordinate Mg(2+). A helical transmembrane segment spans residues 722–740 (DLIVFIAIFADVATLAIAY). At 741–756 (DNAPFSPSPVKWNLPR) the chain is on the extracellular side. The helical transmembrane segment at 757–776 (LWGMSIMMGIILAAGTWITL) threads the bilayer. Topologically, residues 777-826 (TTMFLPKGGIIQNFGSIDGILFLEISLTENWLIFITRAVGPFWSSIPSWQ) are cytoplasmic. The helical transmembrane segment at 827–847 (LAGAVFVVDVVATMFTLFGWW) threads the bilayer. Topologically, residues 848–859 (SQNWTDIVTVVR) are extracellular. The helical transmembrane segment at 860 to 876 (IYIWSIGIFCCLGGAYY) threads the bilayer. The Cytoplasmic portion of the chain corresponds to 877–920 (LMSESETFDRLMNGKPLKENKSTRSVEDFLASMRRVSTQHEKGN).

Belongs to the cation transport ATPase (P-type) (TC 3.A.3) family. Type IIIA subfamily.

It is found in the cell membrane. The catalysed reaction is ATP + H2O + H(+)(in) = ADP + phosphate + 2 H(+)(out). Functionally, the plasma membrane ATPase of plants and fungi is a hydrogen ion pump. The proton gradient it generates drives the active transport of nutrients by H(+)-symport. The resulting external acidification and/or internal alkinization may mediate growth responses. The chain is Plasma membrane ATPase from Zygosaccharomyces rouxii.